We begin with the raw amino-acid sequence, 206 residues long: MKLDRRLVIKILEEKIKSEGIVLGSDILKVNSFLNHQIDPFLMSQIGQAFAEKFSHENISKVLTIESSGIAPALMTSLQLQVPMIFARKHQSRTLNEEFFSASVYSYTKQTENQIAVSKRFINPGDRVLIIDDFLANGQAVQGLLDIINQAGASAVGVGIVIEKRFQAGHQLILSKNLPLVSLASIDRFEDGQVVFSKQGETSHVN.

Xanthine is bound by residues Leu28 and Asn35. Ala136–Ala140 is a binding site for 5-phospho-alpha-D-ribose 1-diphosphate. Lys164 is a binding site for xanthine.

Belongs to the purine/pyrimidine phosphoribosyltransferase family. Xpt subfamily. As to quaternary structure, homodimer.

The protein resides in the cytoplasm. It carries out the reaction XMP + diphosphate = xanthine + 5-phospho-alpha-D-ribose 1-diphosphate. It functions in the pathway purine metabolism; XMP biosynthesis via salvage pathway; XMP from xanthine: step 1/1. Functionally, converts the preformed base xanthine, a product of nucleic acid breakdown, to xanthosine 5'-monophosphate (XMP), so it can be reused for RNA or DNA synthesis. This chain is Xanthine phosphoribosyltransferase, found in Oenococcus oeni (strain ATCC BAA-331 / PSU-1).